Reading from the N-terminus, the 286-residue chain is 33 kDa chaperonin (286 aa).

Disulfide bonds link C236–C238 and C264–C267.

The protein belongs to the HSP33 family. Post-translationally, under oxidizing conditions two disulfide bonds are formed involving the reactive cysteines. Under reducing conditions zinc is bound to the reactive cysteines and the protein is inactive.

Its subcellular location is the cytoplasm. In terms of biological role, redox regulated molecular chaperone. Protects both thermally unfolding and oxidatively damaged proteins from irreversible aggregation. Plays an important role in the bacterial defense system toward oxidative stress. This chain is 33 kDa chaperonin, found in Carboxydothermus hydrogenoformans (strain ATCC BAA-161 / DSM 6008 / Z-2901).